Consider the following 329-residue polypeptide: Ornithine carbamoyltransferase (329 aa).

Residues 51–54 (STRT), glutamine 78, arginine 102, and 129–132 (HPVQ) each bind carbamoyl phosphate. Residues asparagine 174, aspartate 238, and 242–243 (SM) contribute to the L-ornithine site. Carbamoyl phosphate is bound by residues 278 to 279 (CL) and arginine 306.

This sequence belongs to the aspartate/ornithine carbamoyltransferase superfamily. OTCase family.

Its subcellular location is the cytoplasm. The catalysed reaction is carbamoyl phosphate + L-ornithine = L-citrulline + phosphate + H(+). It participates in amino-acid biosynthesis; L-arginine biosynthesis; L-arginine from L-ornithine and carbamoyl phosphate: step 1/3. Reversibly catalyzes the transfer of the carbamoyl group from carbamoyl phosphate (CP) to the N(epsilon) atom of ornithine (ORN) to produce L-citrulline. This is Ornithine carbamoyltransferase from Helicobacter hepaticus (strain ATCC 51449 / 3B1).